A 121-amino-acid chain; its full sequence is Small ribosomal subunit protein uS13 (121 aa).

Residues 89–121 (MRHRRGLPVRGQHTKNNARTRKGKKVSIAGRKK) form a disordered region.

Belongs to the universal ribosomal protein uS13 family. As to quaternary structure, part of the 30S ribosomal subunit. Forms a loose heterodimer with protein S19. Forms two bridges to the 50S subunit in the 70S ribosome.

Located at the top of the head of the 30S subunit, it contacts several helices of the 16S rRNA. In the 70S ribosome it contacts the 23S rRNA (bridge B1a) and protein L5 of the 50S subunit (bridge B1b), connecting the 2 subunits; these bridges are implicated in subunit movement. Contacts the tRNAs in the A and P-sites. The polypeptide is Small ribosomal subunit protein uS13 (Pediococcus pentosaceus (strain ATCC 25745 / CCUG 21536 / LMG 10740 / 183-1w)).